The chain runs to 121 residues: Basic phospholipase A2 homolog zhaoermiatoxin (121 aa).

Cystine bridges form between cysteine 26–cysteine 115, cysteine 28–cysteine 44, cysteine 43–cysteine 95, cysteine 49–cysteine 121, cysteine 50–cysteine 88, cysteine 57–cysteine 81, and cysteine 75–cysteine 86.

This sequence belongs to the phospholipase A2 family. Group II subfamily. R49 sub-subfamily. Homodimer. As to expression, expressed by the venom gland.

Its subcellular location is the secreted. Its function is as follows. Snake venom phospholipase A2 homolog that induces myonecrosis, and edema. Has low myotoxic activity. The protein is Basic phospholipase A2 homolog zhaoermiatoxin of Protobothrops mangshanensis (Mangshan pitviper).